A 92-amino-acid polypeptide reads, in one-letter code: Small ribosomal subunit protein uS19 (92 aa).

It belongs to the universal ribosomal protein uS19 family.

In terms of biological role, protein S19 forms a complex with S13 that binds strongly to the 16S ribosomal RNA. The protein is Small ribosomal subunit protein uS19 of Cellvibrio japonicus (strain Ueda107) (Pseudomonas fluorescens subsp. cellulosa).